Reading from the N-terminus, the 247-residue chain is MIRADGRRPDELRQVTILRGWQEHAEGSALISAGRTRVLCAASVTTGVPRWRKGSGLGWVTAEYSMLPRATDTRNDRESVRGRISGRTHEISRLIGRSLRACIDLKALGENTIAIDCDVLLADGGTRTAAITGAYVALVDAARWLGRPDAIITSVSAVSVGVVKGEAMLDLAYSEDSTADTDMNVVCTGADGFVEVQGTAEGTPFDRTMLDSLLDLAVRGCAQLTAIQTEALRGPVPAGPPRPGGAR.

Residues arginine 87 and 125-127 (GTR) contribute to the phosphate site.

This sequence belongs to the RNase PH family. In terms of assembly, homohexameric ring arranged as a trimer of dimers.

It carries out the reaction tRNA(n+1) + phosphate = tRNA(n) + a ribonucleoside 5'-diphosphate. In terms of biological role, phosphorolytic 3'-5' exoribonuclease that plays an important role in tRNA 3'-end maturation. Removes nucleotide residues following the 3'-CCA terminus of tRNAs; can also add nucleotides to the ends of RNA molecules by using nucleoside diphosphates as substrates, but this may not be physiologically important. Probably plays a role in initiation of 16S rRNA degradation (leading to ribosome degradation) during starvation. The protein is Ribonuclease PH of Frankia casuarinae (strain DSM 45818 / CECT 9043 / HFP020203 / CcI3).